Consider the following 495-residue polypeptide: Cytochrome P450 monooxygenase 88 (495 aa).

A helical membrane pass occupies residues 2–22 (FLQIVTSVLATGLLYALISVL). N25 and N198 each carry an N-linked (GlcNAc...) asparagine glycan. Heme is bound at residue C428.

It belongs to the cytochrome P450 family. Heme is required as a cofactor.

The protein resides in the membrane. Its pathway is secondary metabolite biosynthesis. Functionally, cytochrome P450 monooxygenase that is able to use 4-ethoxybenzoic acid as a substrate for oxidation. The polypeptide is Cytochrome P450 monooxygenase 88 (Postia placenta (strain ATCC 44394 / Madison 698-R) (Brown rot fungus)).